The sequence spans 451 residues: MSRIFGTDGVRGLANGLLTAELAMELSQAAAIVLGHRHAPEGQRPTAVVARDGRASGEFIGAAVTAGLASSGVDVYDAGVLPTPAAAYLVGDIDADFGVMISASHNPAPDNGIKFLAHGGKKLPDAVEDTIQQVYEAKDFVRPTGAEVGRVTRLSDAEDRYILHLVGAIPHRLDGLSIVLDCANGAASGASPDAFRDAGATVHVIGAEPDGLNINDGVGSTHLGPLKQAVRELGADLGIAHDGDADRCLAVDHTGTEVDGDQIMCILAVAMKEAGRLNQDTLVATVMSNLGLQLALDEAGITLVRASVGDRYVLESMVANGYNLGGEQSGHVIMADYATTGDGLLTGLMLASRVAQTGMPLQELARTMTRMPQVMINVKNVDKAAAKTSEPVLEAVARTEERLGAEGRVLLRPSGTEPVVRVMVEAATHEDARREAEQLVSAVEEHLSLQS.

Ser-104 functions as the Phosphoserine intermediate in the catalytic mechanism. Mg(2+) is bound by residues Ser-104, Asp-242, Asp-244, and Asp-246. Ser-104 carries the phosphoserine modification.

It belongs to the phosphohexose mutase family. Mg(2+) serves as cofactor. Post-translationally, activated by phosphorylation.

The catalysed reaction is alpha-D-glucosamine 1-phosphate = D-glucosamine 6-phosphate. In terms of biological role, catalyzes the conversion of glucosamine-6-phosphate to glucosamine-1-phosphate. This is Phosphoglucosamine mutase from Kocuria rhizophila (strain ATCC 9341 / DSM 348 / NBRC 103217 / DC2201).